The sequence spans 861 residues: Bifunctional uridylyltransferase/uridylyl-removing enzyme (861 aa).

Positions Met1–Thr322 are uridylyltransferase. The uridylyl-removing stretch occupies residues Ile323–Leu679. The region spanning Val441–Glu557 is the HD domain. 2 ACT domains span residues Gln680–Pro763 and Leu792–Ile861.

Belongs to the GlnD family. Mg(2+) serves as cofactor.

It catalyses the reaction [protein-PII]-L-tyrosine + UTP = [protein-PII]-uridylyl-L-tyrosine + diphosphate. It carries out the reaction [protein-PII]-uridylyl-L-tyrosine + H2O = [protein-PII]-L-tyrosine + UMP + H(+). Uridylyltransferase (UTase) activity is inhibited by glutamine, while glutamine activates uridylyl-removing (UR) activity. Modifies, by uridylylation and deuridylylation, the PII regulatory proteins (GlnB and homologs), in response to the nitrogen status of the cell that GlnD senses through the glutamine level. Under low glutamine levels, catalyzes the conversion of the PII proteins and UTP to PII-UMP and PPi, while under higher glutamine levels, GlnD hydrolyzes PII-UMP to PII and UMP (deuridylylation). Thus, controls uridylylation state and activity of the PII proteins, and plays an important role in the regulation of nitrogen assimilation and metabolism. This chain is Bifunctional uridylyltransferase/uridylyl-removing enzyme, found in Ralstonia nicotianae (strain ATCC BAA-1114 / GMI1000) (Ralstonia solanacearum).